A 1056-amino-acid polypeptide reads, in one-letter code: Carbamoyl phosphate synthase large chain (1056 aa).

The carboxyphosphate synthetic domain stretch occupies residues 1 to 397; sequence MPRRTDIKKV…GFKKALRSID (397 aa). 12 residues coordinate ATP: Arg-127, Arg-167, Gly-173, Gly-174, Glu-206, Val-208, Glu-213, Gly-239, Val-240, His-241, Gln-282, and Glu-294. The region spanning 131–323 is the ATP-grasp 1 domain; it reads KALMQKIGEP…IARVAAKIAI (193 aa). Mg(2+) is bound by residues Gln-282, Glu-294, and Asn-296. Residues Gln-282, Glu-294, and Asn-296 each coordinate Mn(2+). The segment at 398–530 is oligomerization domain; sequence TDINTHTNHN…YSTHGVTTDI (133 aa). The segment at 531–919 is carbamoyl phosphate synthetic domain; the sequence is IQNDKKKVLI…YKACISADNE (389 aa). Positions 661–852 constitute an ATP-grasp 2 domain; sequence SELLDALKIP…LAKVAAKVMI (192 aa). Residues Arg-697, Ser-736, Leu-738, Glu-743, Gly-768, Val-769, His-770, Ser-771, Gln-811, and Glu-823 each contribute to the ATP site. Mg(2+) is bound by residues Gln-811, Glu-823, and Asn-825. Mn(2+)-binding residues include Gln-811, Glu-823, and Asn-825. The MGS-like domain maps to 918–1056; the sequence is NELPIEGNVF…PISHYLSEVE (139 aa). The allosteric domain stretch occupies residues 920–1056; that stretch reads LPIEGNVFIS…PISHYLSEVE (137 aa).

The protein belongs to the CarB family. Composed of two chains; the small (or glutamine) chain promotes the hydrolysis of glutamine to ammonia, which is used by the large (or ammonia) chain to synthesize carbamoyl phosphate. Tetramer of heterodimers (alpha,beta)4. Requires Mg(2+) as cofactor. Mn(2+) serves as cofactor.

It carries out the reaction hydrogencarbonate + L-glutamine + 2 ATP + H2O = carbamoyl phosphate + L-glutamate + 2 ADP + phosphate + 2 H(+). The catalysed reaction is hydrogencarbonate + NH4(+) + 2 ATP = carbamoyl phosphate + 2 ADP + phosphate + 2 H(+). The protein operates within amino-acid biosynthesis; L-arginine biosynthesis; carbamoyl phosphate from bicarbonate: step 1/1. Its pathway is pyrimidine metabolism; UMP biosynthesis via de novo pathway; (S)-dihydroorotate from bicarbonate: step 1/3. Large subunit of the glutamine-dependent carbamoyl phosphate synthetase (CPSase). CPSase catalyzes the formation of carbamoyl phosphate from the ammonia moiety of glutamine, carbonate, and phosphate donated by ATP, constituting the first step of 2 biosynthetic pathways, one leading to arginine and/or urea and the other to pyrimidine nucleotides. The large subunit (synthetase) binds the substrates ammonia (free or transferred from glutamine from the small subunit), hydrogencarbonate and ATP and carries out an ATP-coupled ligase reaction, activating hydrogencarbonate by forming carboxy phosphate which reacts with ammonia to form carbamoyl phosphate. The protein is Carbamoyl phosphate synthase large chain of Methanosphaerula palustris (strain ATCC BAA-1556 / DSM 19958 / E1-9c).